The sequence spans 37 residues: SPTCTGADRPCAACCPCCPGTSCKGPEPNGVSYCRND.

Disulfide bonds link C4/C18, C11/C23, C14/C15, and C17/C34.

This sequence belongs to the neurotoxin 11 (kappa toxin) family. As to expression, expressed by the venom gland.

It localises to the secreted. Its function is as follows. This excitatory toxin inhibits insect calcium-activated potassium (KCa) channels (Slo-type). The protein is Lambda-hexatoxin-Hf1a of Hadronyche formidabilis (Northern tree funnel-web spider).